We begin with the raw amino-acid sequence, 90 residues long: Conotoxin Mr22.1 (90 aa).

Residues 1–18 form the signal peptide; the sequence is MMTRVFFAMFFLMALTEG. The propeptide occupies 19–49; that stretch reads WPRLYDSDCVRGRNMHITCFKDQTCGLTVKR. W75 carries the 6'-bromotryptophan modification.

The protein belongs to the E superfamily. In terms of processing, contains 4 disulfide bonds. As to expression, expressed by the venom duct.

It is found in the secreted. The chain is Conotoxin Mr22.1 from Conus marmoreus (Marble cone).